Consider the following 612-residue polypeptide: Chaperone protein DnaK (612 aa).

Thr-173 is subject to Phosphothreonine; by autocatalysis. The tract at residues 576–612 (AAKQAQAQQDGGAGAKKADDNVVDAEYEEVNDDKDQK) is disordered. The segment covering 596 to 612 (NVVDAEYEEVNDDKDQK) has biased composition (acidic residues).

The protein belongs to the heat shock protein 70 family.

Acts as a chaperone. This is Chaperone protein DnaK from Bacillus licheniformis (strain ATCC 14580 / DSM 13 / JCM 2505 / CCUG 7422 / NBRC 12200 / NCIMB 9375 / NCTC 10341 / NRRL NRS-1264 / Gibson 46).